A 387-amino-acid chain; its full sequence is Major outer membrane protein P.IA (387 aa).

Positions 1-19 (MRKKLTALVLSALPLAAVA) are cleaved as a signal peptide.

The protein belongs to the Gram-negative porin family. As to quaternary structure, homotrimer.

The protein resides in the cell outer membrane. In terms of biological role, serves as a slightly cation selective porin. Major antigen on the gonococcal cell surface and it may have pathogenic properties in addition to its porin activity. The sequence is that of Major outer membrane protein P.IA (porA) from Neisseria meningitidis serogroup C.